The primary structure comprises 868 residues: MHEQYTPRDIEAAAQKFWDEQQSFAVTEQPGKDTYYCLSMFPYPSGKLHMGHVRNYTIGDVIARYQRMLGKNVLQPMGWDAFGMPAENAAMKNNVAPAKWTYENIDYMKTQLKSLGLAIDWAREVTTCKPDYYRWEQWLFTRLFEKGIIYRKNGTVNWDPADQTVLANEQVIDGRGWRSGALIEKREIPMYYFRITDYADELLESLDELPGWPEQVKTMQRNWIGKSRGMEVQFPYDKASIGHEGTLKVFTTRPDTLMGATYVAVAAEHPLATQAAQGNPALQAFIDECKSGSVAEADMATQEKKGMATSLLVEHPLTGEKLPVWVANYVLMHYGDGAVMAVPAHDERDFEFAHKYNLPVKAVVRTSAGDEVGSEWQAAYGEHGQLINSAEFDGLDFAGAFDAIEAALIRKELGKSRTQFRLRDWGISRQRYWGCPIPIIHCPSCGDVPVPEDQLPVTLPENVVPDGAGSPLARMPEFYECSCPKCGAAAKRETDTMDTFVESSWYFARYASPNYDKGLVDPKAANHWLPVDQYIGGIEHAILHLLYARFFHKLMRDEGLVTSNEPFKNLLTQGMVVAETYYRVASNGGKDWFNPADVEIERDAKAKIIGARLKTDGLPVEIGGTEKMSKSKNNGVDPQSMIEAYGADTCRLFMMFASPPDMSLEWSDSGVEGASRFLRRVWRLAQAHVSQGLPGKLDVAALDDAQKVIRRAIHAAIKQASTDVGQFHKFNTAIAQVMTVMNVLEKAPQATEQDRALLQEGLEAVTLLLAPITPHISHALWQHLGHAGSVIDAAWPSVDEQALVQDSITLVVQVNGKLRGQVEMPAAASREEVEAAARSNENVLRFIDGLTIRKVIVVPGKLVNIVAN.

Positions 42–52 match the 'HIGH' region motif; it reads PYPSGKLHMGH. The 'KMSKS' region signature appears at 627–631; it reads KMSKS. Lys630 provides a ligand contact to ATP.

The protein belongs to the class-I aminoacyl-tRNA synthetase family.

It is found in the cytoplasm. It carries out the reaction tRNA(Leu) + L-leucine + ATP = L-leucyl-tRNA(Leu) + AMP + diphosphate. The chain is Leucine--tRNA ligase from Pseudomonas putida (strain ATCC 47054 / DSM 6125 / CFBP 8728 / NCIMB 11950 / KT2440).